A 306-amino-acid chain; its full sequence is tRNA dimethylallyltransferase (306 aa).

Residue 9–16 (GPTGIGKT) coordinates ATP. 11–16 (TGIGKT) provides a ligand contact to substrate. Residues 34 to 37 (DSMQ) form an interaction with substrate tRNA region.

This sequence belongs to the IPP transferase family. Monomer. The cofactor is Mg(2+).

The enzyme catalyses adenosine(37) in tRNA + dimethylallyl diphosphate = N(6)-dimethylallyladenosine(37) in tRNA + diphosphate. Catalyzes the transfer of a dimethylallyl group onto the adenine at position 37 in tRNAs that read codons beginning with uridine, leading to the formation of N6-(dimethylallyl)adenosine (i(6)A). This Lactobacillus johnsonii (strain CNCM I-12250 / La1 / NCC 533) protein is tRNA dimethylallyltransferase.